Here is a 62-residue protein sequence, read N- to C-terminus: ATP synthase subunit J, mitochondrial (62 aa).

The chain crosses the membrane as a helical span at residues 13–32; the sequence is IVKPLWPYAVGGVITFFLFA.

F-type ATP synthases have 2 components, the catalytic core F(1) and the membrane-embedded component F(0), linked together by a central stalk and a peripheral stalk. The central stalk, also called rotor shaft, is often seen as part of F(1). The peripheral stalk is seen as part of F(0). F(0) contains the membrane channel next to the rotor. F-type ATP synthases form dimers but each monomer functions independently in ATP generation. The dimer consists of 17 different polypeptides: ATP1 (subunit alpha, 3 molecules per monomer, part of F(1)), ATP2 (subunit beta, 3 copies per monomer, part of F(1)), ATP3 (subunit gamma, part of the central stalk), ATP4 (subunit b, part of the peripheral stalk), ATP5/OSCP (subunit 5/OSCP, part of the peripheral stalk), ATP6 (subunit a, part of the peripheral stalk), ATP7 (subunit d, part of the peripheral stalk), ATP8 (subunit 8, part of the peripheral stalk), OLI1 (subunit c, part of the rotor, 10 molecules per monomer), ATP14 (subunit h, part of the peripheral stalk), ATP15 (subunit epsilon, part of the central stalk), ATP16 (subunit delta, part of the central stalk), ATP17 (subunit f, part of the peripheral stalk), ATP18 (subunit i/j, part of the peripheral stalk), ATP19 (subunit k, dimer-specific, at interface between monomers), ATP20 (subunit g, at interface between monomers), TIM11 (subunit e, at interface between monomers).

It is found in the mitochondrion inner membrane. Its function is as follows. Mitochondrial membrane ATP synthase (F(1)F(0) ATP synthase or Complex V) produces ATP from ADP in the presence of a proton gradient across the membrane which is generated by electron transport complexes of the respiratory chain. F-type ATP synthases consist of two structural domains, F(1) - containing the extramembraneous catalytic core, and F(0) - containing the membrane proton channel, linked together by a central stalk and a peripheral stalk. During catalysis, ATP synthesis in the catalytic domain of F(1) is coupled via a rotary mechanism of the central stalk subunits to proton translocation. Part of the complex F(0) domain. Minor subunit located with subunit a/ATP6 in the membrane. The protein is ATP synthase subunit J, mitochondrial of Yarrowia lipolytica (strain CLIB 122 / E 150) (Yeast).